A 351-amino-acid polypeptide reads, in one-letter code: Transmembrane protein 255A (351 aa).

A run of 4 helical transmembrane segments spans residues 30–50, 57–77, 89–109, and 226–246; these read IYVTVTLLIVSMLILTVGLAA, VTVGGYYPGVILGFGSFLGII, LVASIVFISFGVIAAFCCAIV, and TILNIVGLFLGIITAAVLGGF. The disordered stretch occupies residues 302–331; the sequence is FPSSPPSGLSDEQEPQSPSPSPSYMWSSSA.

It belongs to the TMEM255 family.

The protein localises to the membrane. The sequence is that of Transmembrane protein 255A (Tmem255a) from Mus musculus (Mouse).